A 216-amino-acid polypeptide reads, in one-letter code: Putative ripening-related protein 4 (216 aa).

Residues 1–25 form the signal peptide; sequence MAANVKVLVVLALLQLMSLHAVVHG.

The protein belongs to the kiwellin family.

It is found in the secreted. This chain is Putative ripening-related protein 4, found in Oryza sativa subsp. japonica (Rice).